A 188-amino-acid polypeptide reads, in one-letter code: Elongation factor P (188 aa).

N6-(3,6-diaminohexanoyl)-5-hydroxylysine is present on Lys-34.

Belongs to the elongation factor P family. Post-translationally, may be beta-lysylated on the epsilon-amino group of Lys-34 by the combined action of EpmA and EpmB, and then hydroxylated on the C5 position of the same residue by EpmC (if this protein is present). Lysylation is critical for the stimulatory effect of EF-P on peptide-bond formation. The lysylation moiety may extend toward the peptidyltransferase center and stabilize the terminal 3-CCA end of the tRNA. Hydroxylation of the C5 position on Lys-34 may allow additional potential stabilizing hydrogen-bond interactions with the P-tRNA.

Its subcellular location is the cytoplasm. It functions in the pathway protein biosynthesis; polypeptide chain elongation. Functionally, involved in peptide bond synthesis. Alleviates ribosome stalling that occurs when 3 or more consecutive Pro residues or the sequence PPG is present in a protein, possibly by augmenting the peptidyl transferase activity of the ribosome. Modification of Lys-34 is required for alleviation. The protein is Elongation factor P of Xanthomonas campestris pv. campestris (strain B100).